The following is a 469-amino-acid chain: Glutamate--tRNA ligase (469 aa).

The 'HIGH' region signature appears at 11 to 21; that stretch reads PSPTGFIHLGN. Residues 116–131 are compositionally biased toward basic and acidic residues; it reads ASGEKPRYDGTWRPEP. The disordered stretch occupies residues 116–139; sequence ASGEKPRYDGTWRPEPGKVLPTPP. The short motif at 243-247 is the 'KMSKS' region element; that stretch reads KMSKR. Lysine 246 is a binding site for ATP.

This sequence belongs to the class-I aminoacyl-tRNA synthetase family. Glutamate--tRNA ligase type 1 subfamily. As to quaternary structure, monomer.

The protein localises to the cytoplasm. The enzyme catalyses tRNA(Glu) + L-glutamate + ATP = L-glutamyl-tRNA(Glu) + AMP + diphosphate. Its function is as follows. Catalyzes the attachment of glutamate to tRNA(Glu) in a two-step reaction: glutamate is first activated by ATP to form Glu-AMP and then transferred to the acceptor end of tRNA(Glu). The protein is Glutamate--tRNA ligase of Paraburkholderia phymatum (strain DSM 17167 / CIP 108236 / LMG 21445 / STM815) (Burkholderia phymatum).